The following is a 732-amino-acid chain: MAPKSKKQAATQSKSKKSKDLVDERFQAIVLTDSFETRFMPLTAVHPRCLLPLANVPLIEYTLEFLANAGVNEVYLMCSAHADQIQEYIENSKWMGDNSPFSVTTIMSIESRSVGDTMRDLDNRGLIAGDFLLVSGDVVTNMDFSKALQFHKQKKAQDKDHIATMVLNQASPLHRTRSQIDPAAFVLDKETNRCIFYQSIPPVSGKKTCISIDPELLEDFQGELQVRNDLIDCHVDICSPHVPQIFQENFDYQYLRSDFLKGVLTSDLLKKTIYAYISKDSSEYAARVESWSTYDAISQDILARWCYPLVPDSNLVEGNSYSYELNNIYKEDKIILAQSCKIGTSTSIGRNSSVGEGTQIKNSVIGRNCTIGKNVVIENSYIWDNAVIKDNSVLNRSIVAADAQIGNNVTLSPGSVIGFNVIIGDDKVIPHNVKIVETPIVTENEFGDFDDESNSEDENEYEDGNAVPVLAVKDVELVGETGKGFAYESEIESGDEDDEEFVGNGTYSGIIYQMKSLNVSDDSIASVSNKKVKKHSHRRRLSMNSMISDNGGAFESDEGEEEEDFGVEGLATVTRAIENNHDIDTALLELNTLRMSMNVTYHDVRSVTTQALVNKIVDFITTGTLTPQEAATKIFTKWGIMFKRQVFSPEEEVDLLNIVEEKSSVLDKAYNQIVLFLGVKSFYDMEVVEEENILKWWNDGENDEVRTLAAKFITWLQEADEEDSDEDDEDSE.

Residues 559–726 (GEEEEDFGVE…QEADEEDSDE (168 aa)) form the W2 domain.

The protein belongs to the eIF-2B gamma/epsilon subunits family. Component of the translation initiation factor 2B (eIF2B) complex which is a heterodecamer of two sets of five different subunits: alpha, beta, gamma, delta and epsilon. Subunits alpha, beta and delta comprise a regulatory subcomplex and subunits epsilon and gamma comprise a catalytic subcomplex. Within the complex, the hexameric regulatory complex resides at the center, with the two heterodimeric catalytic subcomplexes bound on opposite sides.

The protein resides in the cytoplasm. It localises to the cytosol. Functionally, acts as a component of the translation initiation factor 2B (eIF2B) complex, which catalyzes the exchange of GDP for GTP on the eukaryotic initiation factor 2 (eIF2) complex gamma subunit. Its guanine nucleotide exchange factor activity is repressed when bound to eIF2 complex phosphorylated on the alpha subunit, thereby limiting the amount of methionyl-initiator methionine tRNA available to the ribosome and consequently global translation is repressed. The protein is Translation initiation factor eIF2B subunit epsilon (GCD6) of Candida albicans (strain SC5314 / ATCC MYA-2876) (Yeast).